We begin with the raw amino-acid sequence, 180 residues long: MTFRILGIDPGLRLTGFGVIEKTGEKLAYVASGTIKTTTGKGSEIEDLPTRLKIILDSLAEVIDNYQPQQAAIEKVFVNVNPQSTLLLGQARGAAISALVLQGLPIAEYTALQVKQSVVGHGHAAKDQVQEMVKRLLNLPGLPRPDSADALACAICHAHGGQGLGKLATAGFRVKGGRLI.

Active-site residues include Asp9, Glu74, and Asp146. Mg(2+) is bound by residues Asp9, Glu74, and Asp146.

It belongs to the RuvC family. As to quaternary structure, homodimer which binds Holliday junction (HJ) DNA. The HJ becomes 2-fold symmetrical on binding to RuvC with unstacked arms; it has a different conformation from HJ DNA in complex with RuvA. In the full resolvosome a probable DNA-RuvA(4)-RuvB(12)-RuvC(2) complex forms which resolves the HJ. Requires Mg(2+) as cofactor.

It localises to the cytoplasm. The catalysed reaction is Endonucleolytic cleavage at a junction such as a reciprocal single-stranded crossover between two homologous DNA duplexes (Holliday junction).. The RuvA-RuvB-RuvC complex processes Holliday junction (HJ) DNA during genetic recombination and DNA repair. Endonuclease that resolves HJ intermediates. Cleaves cruciform DNA by making single-stranded nicks across the HJ at symmetrical positions within the homologous arms, yielding a 5'-phosphate and a 3'-hydroxyl group; requires a central core of homology in the junction. The consensus cleavage sequence is 5'-(A/T)TT(C/G)-3'. Cleavage occurs on the 3'-side of the TT dinucleotide at the point of strand exchange. HJ branch migration catalyzed by RuvA-RuvB allows RuvC to scan DNA until it finds its consensus sequence, where it cleaves and resolves the cruciform DNA. The polypeptide is Crossover junction endodeoxyribonuclease RuvC (Methylobacillus flagellatus (strain ATCC 51484 / DSM 6875 / VKM B-1610 / KT)).